A 736-amino-acid chain; its full sequence is Transcription factor E2F8 (736 aa).

Residues 1–26 (MEEGSKENCGFNGSPMGSRSPPKQLT) are disordered. The segment covering 15-26 (PMGSRSPPKQLT) has biased composition (polar residues). 2 DNA-binding regions span residues 98–167 (RKEK…IWHG) and 240–326 (RKEK…QWTC). Disordered regions lie at residues 386 to 405 (RRKI…GSSS), 435 to 456 (SACK…QTPT), 483 to 551 (EQTL…AVDD), and 716 to 736 (PGGM…GTDD). Positions 393-405 (PSSPIKSGDGSSS) are enriched in low complexity. 2 stretches are compositionally biased toward basic and acidic residues: residues 509–539 (GRHE…DRGC) and 726–736 (SARKLDVGTDD).

This sequence belongs to the E2F/DP family. Homodimer and heterodimer: mainly forms homodimers and, to a lesser extent, heterodimers with e2f7.

It localises to the nucleus. Functionally, atypical E2F transcription factor that participates in various processes such as angiogenesis and polyploidization of specialized cells. Mainly acts as a transcription repressor that binds DNA independently of DP proteins and specifically recognizes the E2 recognition site 5'-TTTC[CG]CGC-3'. Directly represses transcription of classical E2F transcription factors such as e2f1. Acts as a regulator of S-phase by recognizing and binding the E2-related site 5'-TTCCCGCC-3' and mediating repression of G1/S-regulated genes. Acts as a promoter of sprouting angiogenesis, possibly by acting as a transcription activator. This is Transcription factor E2F8 (e2f8) from Xenopus tropicalis (Western clawed frog).